The primary structure comprises 208 residues: Imidazoleglycerol-phosphate dehydratase (208 aa).

This sequence belongs to the imidazoleglycerol-phosphate dehydratase family.

The protein localises to the cytoplasm. The catalysed reaction is D-erythro-1-(imidazol-4-yl)glycerol 3-phosphate = 3-(imidazol-4-yl)-2-oxopropyl phosphate + H2O. Its pathway is amino-acid biosynthesis; L-histidine biosynthesis; L-histidine from 5-phospho-alpha-D-ribose 1-diphosphate: step 6/9. This Arthrobacter sp. (strain FB24) protein is Imidazoleglycerol-phosphate dehydratase.